The primary structure comprises 2624 residues: Transcription factor TFIIIB component B'' homolog (2624 aa).

A disordered region spans residues 1–142 (MFRRARLSVK…TKEKQPCSDR (142 aa)). The interval 1–299 (MFRRARLSVK…TYSSFRKNYY (299 aa)) is interaction with ZBTB43. A compositionally biased stretch (basic and acidic residues) spans 63–77 (PQEKAPRSSTEKTGG). Residues 99–119 (SSTSSLVKSSVSVPSESHPLS) are compositionally biased toward low complexity. The segment covering 120–132 (TINQEAPQPTATS) has biased composition (polar residues). Residues 133–142 (TKEKQPCSDR) are compositionally biased toward basic and acidic residues. Residues 144-177 (RIYKAQKLREMLKEELRKEKKQWKNKYAINESQR) adopt a coiled-coil conformation. The interval 193–241 (LPDNNPMTSSLEQEKKTEKPSTPVQTREQEGKSTPNAEDNEMEEETDDG) is disordered. The segment covering 212–229 (PSTPVQTREQEGKSTPNA) has biased composition (polar residues). Over residues 230 to 240 (EDNEMEEETDD) the composition is skewed to acidic residues. Residues 295-345 (RKNYYSKPWSNKETDMFFLAISMVGTDFSMIGQLFPHRARIEIKNKFKREE) enclose the Myb-like domain. Residues 355 to 470 (AFQEKRPFDF…QKKRRRKKQD (116 aa)) form a required for phosphorylation by CSNK2A1 region. Disordered stretches follow at residues 379 to 449 (EKRK…SRED), 544 to 567 (LSLS…TSDL), 606 to 663 (ENVK…MNTL), and 729 to 759 (EEIG…SRKD). The segment covering 397-407 (TKPRKNVKVKK) has biased composition (basic residues). Positions 552 to 565 (ATSVATESSESSTS) are enriched in low complexity. Composition is skewed to basic and acidic residues over residues 637–663 (TESE…MNTL) and 736–759 (EKNE…SRKD). A 1; approximate repeat occupies 823–877 (GRREISSKEEVLEKILVSGEMAAALRETVRLDTSPKEMVPAEINTKEMQSDLKET). The interval 823–1327 (GRREISSKEE…PRENELEETS (505 aa)) is 9 X 55 AA repeats of G-R-R-X-I-S-P-X-E-N-G-X-E-E-V-K-P-X-X-E-M-E-T-D-L-K-X-T-G-R-E-X-X-X-R-E-K-T-X-E-X-X-D-A-X-E-E-I-D-X-D-L-E-E-T. 6 consecutive repeat copies span residues 878 to 932 (GRRA…LEEA), 933 to 987 (GRRE…LEET), 988 to 1040 (GRRK…LEET), 1041 to 1094 (EREV…LEET), 1095 to 1148 (EREI…LEET), and 1149 to 1203 (GRRE…LEET). Threonine 915 carries the post-translational modification Phosphothreonine. 2 stretches are compositionally biased toward basic and acidic residues: residues 930–957 (EEAG…ETDL) and 979–1006 (EIDK…KPVD). The segment at 930–1222 (EEAGRREISP…GPEEVKPVGK (293 aa)) is disordered. The span at 1030–1041 (DATEEIDLEETE) shows a compositional bias: acidic residues. Residues 1052-1079 (EEVKPLGEMETDLKATGRDSFPRGKTPE) are compositionally biased toward basic and acidic residues. A coiled-coil region spans residues 1078–1103 (PEVIDAIEEIEIDLEETEREISPQEN). Residues 1082-1095 (DAIEEIEIDLEETE) are compositionally biased toward acidic residues. Positions 1120-1133 (ATGREISPREKTPE) are enriched in basic and acidic residues. Acidic residues predominate over residues 1136–1145 (DATEEIDKDL). The span at 1161 to 1190 (EEVKPVDEMETDLKTTGREGSSREKTREVI) shows a compositional bias: basic and acidic residues. The segment covering 1194-1204 (EVIETDLEETE) has biased composition (acidic residues). Residues 1204-1257 (EREISPQENGPEEVKPVGKMETDLKEIREEISQREKVLAEFSAIREKEIDLKET) form an 8; approximate repeat. The stretch at 1223–1284 (METDLKEIRE…VEEMEADLKE (62 aa)) forms a coiled coil. One copy of the 9; approximate repeat lies at 1258–1327 (GKRDIPIMEK…PRENELEETS (70 aa)). A compositionally biased stretch (basic and acidic residues) spans 1306 to 1321 (AELKQTGKTDISPREN). Disordered regions lie at residues 1306-1348 (AELK…SAVP), 1365-1440 (TPVE…RFKR), 1519-1543 (TERN…VQKN), 1684-1722 (KAKP…LQKG), 1819-1863 (STSE…ASKA), 2130-2164 (GAEM…ENKD), 2181-2200 (SEVN…QEVH), 2207-2241 (VASS…GDSV), 2444-2501 (FQSR…SRPG), and 2519-2566 (SDEP…PSPS). Positions 1326–1344 (TSTSRQTDTHLMQSGSNDF) are enriched in polar residues. A compositionally biased stretch (basic and acidic residues) spans 1366–1378 (PVEEKRNSEKEVS). Polar residues-rich tracts occupy residues 1379–1390 (SHFSHFKISSQT), 1411–1421 (SDINLSKSLPQ), and 1519–1529 (TERNLSPSNSC). Basic and acidic residues predominate over residues 1695–1719 (KKEEPVLEKVTTDQSKEGKPEDHLL). Positions 1844 to 1853 (RGSKRVRGKT) are enriched in basic residues. The span at 2131–2151 (AEMETQRETEKNASKATELEN) shows a compositional bias: basic and acidic residues. Over residues 2470–2479 (VSDKEERTDA) the composition is skewed to basic and acidic residues. Over residues 2488–2498 (SRTSSSKASLS) the composition is skewed to low complexity. Residues 2526 to 2544 (HSKKRLKPLIPGLRKKLKR) are compositionally biased toward basic residues.

Component of TFIIIB complex. The TFIIIB complex has two activities, alpha and beta. The TFIIIB-alpha and TFIIIB-beta activities are required for transcription of genes with TFIIIC-bound internal promoters and PSE transcription factor-bound external promoters, respectively. The TFIIIB-alpha activity complex is composed of TBP, BDP1, and a complex containing both BRF2 and at least four stably associated proteins; YY1 facilitates the formation of TFIIIB-alpha activity complex. The TFIIIB-beta activity complex is composed of TBP, BDP1, and BRF1. Interacts with BRF1; this interaction diminishes during mitosis resulting in the release of BDP1 from chromosomal templates. Component of TFIIIC complex. The TFIIIC complex has two activities, C1 and C2. The TFIIIC2 activity complex is only required for transcription of the 'classical' pol III genes whereas the TFIIIC1 activity complex is required for transcription of all pol III genes. The TFIIIC1 activity complex is composed at least of BDP1. Interacts with ZBTB43. Post-translationally, phosphorylated by CSNK2A1 during mitosis, resulting in its release from chromatin and suppression of polymerase III transcription. Isoform 2 is highly expressed in cerebellum.

The protein resides in the nucleus. In terms of biological role, general activator of RNA polymerase III transcription. Requires for transcription from all three types of polymerase III promoters. Requires for transcription of genes with internal promoter elements and with promoter elements upstream of the initiation site. The sequence is that of Transcription factor TFIIIB component B'' homolog (BDP1) from Homo sapiens (Human).